Reading from the N-terminus, the 57-residue chain is Large ribosomal subunit protein bL32 (57 aa).

Basic residues predominate over residues 1 to 19; sequence MATPKRRMSRANTRSRRSQ. The tract at residues 1–20 is disordered; it reads MATPKRRMSRANTRSRRSQW.

This sequence belongs to the bacterial ribosomal protein bL32 family.

In Mycobacterium marinum (strain ATCC BAA-535 / M), this protein is Large ribosomal subunit protein bL32.